The chain runs to 409 residues: Wadjet protein JetD (409 aa).

Functionally, component of antiplasmid transformation system Wadjet type I, composed of JetA, JetB, JetC and JetD. Expression of Wadjet type I in B.subtilis (strain BEST7003) reduces the transformation efficiency of plasmid pHCMC05. In Bacillus cereus (strain Q1), this protein is Wadjet protein JetD.